Reading from the N-terminus, the 201-residue chain is Large ribosomal subunit protein uL4 (201 aa).

Residues 39–67 form a disordered region; that stretch reads ARQGSRAQKTRSEVAGGGRKPWKQKGSGR.

This sequence belongs to the universal ribosomal protein uL4 family. Part of the 50S ribosomal subunit.

Its function is as follows. One of the primary rRNA binding proteins, this protein initially binds near the 5'-end of the 23S rRNA. It is important during the early stages of 50S assembly. It makes multiple contacts with different domains of the 23S rRNA in the assembled 50S subunit and ribosome. Functionally, forms part of the polypeptide exit tunnel. In Marinomonas sp. (strain MWYL1), this protein is Large ribosomal subunit protein uL4.